Here is a 2424-residue protein sequence, read N- to C-terminus: Voltage-dependent P/Q-type calcium channel subunit alpha-1A (2424 aa).

The Cytoplasmic segment spans residues 1-98; that stretch reads MARFGDEMPA…KYAKKITEWP (98 aa). The stretch at 85–363 is one I repeat; it reads NVVRKYAKKI…LVLGVLSGEF (279 aa). Residues 99–117 traverse the membrane as a helical segment; the sequence is PFEYMILATIIANCIVLAL. The Extracellular portion of the chain corresponds to 118-135; sequence EQHLPDDDKTPMSERLDD. Residues 136–155 form a helical membrane-spanning segment; the sequence is TEPYFIGIFCFEAGIKIIAL. The Cytoplasmic segment spans residues 156-167; sequence GFAFHKGSYLRN. Residues 168-185 form a helical membrane-spanning segment; sequence GWNVMDFVVVLTGILATV. Residues 186-190 lie on the Extracellular side of the membrane; that stretch reads GTEFD. A helical membrane pass occupies residues 191 to 209; that stretch reads LRTLRAVRVLRPLKLVSGI. Over 210-228 the chain is Cytoplasmic; it reads PSLQVVLKSIMKAMIPLLQ. The helical transmembrane segment at 229-248 threads the bilayer; sequence IGLLLFFAILIFAIIGLEFY. Over 249–335 the chain is Extracellular; sequence MGKFHTTCFE…NSNDASGNTW (87 aa). Asn283 carries N-linked (GlcNAc...) asparagine glycosylation. Ca(2+) is bound at residue Glu318. The chain crosses the membrane as a helical span at residues 336-360; it reads NWLYFIPLIIIGSFFMLNLVLGVLS. Topologically, residues 361–487 are cytoplasmic; it reads GEFAKERERV…FYIRRMVKTQ (127 aa). The segment at 383–400 is binding to the beta subunit; the sequence is QQIERELNGYMEWISKAE. Phosphothreonine is present on Thr409. Residues Ser448 and Ser451 each carry the phosphoserine modification. The II repeat unit spans residues 473 to 717; sequence ERRMRFYIRR…VFLAIAVDNL (245 aa). Residues 488-506 traverse the membrane as a helical segment; sequence AFYWTVLSLVALNTLCVAI. Topologically, residues 507 to 521 are extracellular; the sequence is VHYNQPEWLSDFLYY. The chain crosses the membrane as a helical span at residues 522–541; the sequence is AEFIFLGLFMSEMFIKMYGL. At 542–549 the chain is on the cytoplasmic side; sequence GTRPYFHS. Residues 550–568 form a helical membrane-spanning segment; it reads SFNCFDCGVIIGSIFEVIW. The Extracellular segment spans residues 569 to 578; the sequence is AVIKPGTSFG. Residues 579–597 form a helical membrane-spanning segment; the sequence is ISVLRALRLLRIFKVTKYW. Residues 598 to 616 lie on the Cytoplasmic side of the membrane; it reads ASLRNLVVSLLNSMKSIIS. The helical transmembrane segment at 617–636 threads the bilayer; sequence LLFLLFLFIVVFALLGMQLF. Over 637-689 the chain is Extracellular; it reads GGQFNFDEGTPPTNFDTFPAAIMTVFQILTGEDWNEVMYDGIKSQGGVQGGMV. Ca(2+) is bound at residue Glu668. Residues 690–714 traverse the membrane as a helical segment; it reads FSIYFIVLTLFGNYTLLNVFLAIAV. Over 715 to 1253 the chain is Cytoplasmic; it reads DNLANAQELT…RLCHYILNLR (539 aa). Phosphoserine is present on residues Ser750, Ser753, and Ser790. The interval 819–1229 is disordered; that stretch reads HLDRPLVVDP…GEDGPKPMPP (411 aa). Basic and acidic residues-rich tracts occupy residues 893-912, 922-931, and 969-996; these read ELSREGPYGRESDHQAREGG, EAERGKAGDP, and RPGEDGPDDKAERRGRHREGSRPARSGE. Residues 1053–1065 are compositionally biased toward polar residues; that stretch reads PNLSTTRPIQQDL. Residues Ser1091 and Ser1104 each carry the phosphoserine modification. Positions 1110-1140 are enriched in low complexity; the sequence is SSTDPAGPTPATAANPQNSTASRRTPNNPGN. Residues 1151-1168 are compositionally biased toward polar residues; sequence ENSLIVTNPSTAQTNSAK. Over residues 1204-1214 the composition is skewed to basic and acidic residues; the sequence is LPKKEDEKKEE. The III repeat unit spans residues 1240–1523; the sequence is NPLRRLCHYI…IFVALIIITF (284 aa). Residues 1254 to 1272 form a helical membrane-spanning segment; the sequence is YFEMCILMVIAMSSIALAA. The Extracellular segment spans residues 1273-1288; it reads EDPVQPNAPRNNVLRY. Residues 1289–1308 form a helical membrane-spanning segment; sequence FDYVFTGVFTFEMVIKMIDL. The Cytoplasmic portion of the chain corresponds to 1309–1320; that stretch reads GLVLHQGAYFRD. Residues 1321-1339 form a helical membrane-spanning segment; it reads LWNILDFIVVSGALVAFAF. The Extracellular segment spans residues 1340 to 1350; it reads TGNSKGKDINT. The helical transmembrane segment at 1351–1369 threads the bilayer; the sequence is IKSLRVLRVLRPLKTIKRL. At 1370–1388 the chain is on the cytoplasmic side; that stretch reads PKLKAVFDCVVNSLKNVFN. Residues 1389–1408 form a helical membrane-spanning segment; that stretch reads ILIVYMLFMFIFAVVAVQLF. Residues 1409 to 1495 are Extracellular-facing; it reads KGKFFHCTDE…QGPSPGYRME (87 aa). Ca(2+) is bound at residue Glu1469. The helical transmembrane segment at 1496–1520 threads the bilayer; it reads MSIFYVVYFVVFPFFFVNIFVALII. The Cytoplasmic portion of the chain corresponds to 1521-1575; that stretch reads ITFQEQGDKMMEEYSLEKNERACIDFAISAKPLTRHMPQNKQSFQYRMWQFVVSP. An IV repeat occupies 1560-1823; the sequence is NKQSFQYRMW…LFVAVIMDNF (264 aa). Residues 1576–1604 traverse the membrane as a helical segment; sequence PFEYTIMAMIALNTIVLMMKFYGASVAYD. The Extracellular segment spans residues 1605 to 1609; the sequence is NALKV. Residues 1610-1629 traverse the membrane as a helical segment; the sequence is FNIVFTSLFSLECLLKVLAF. Over 1630-1637 the chain is Cytoplasmic; the sequence is GILNYFRD. Residues 1638–1656 traverse the membrane as a helical segment; the sequence is AWNIFDFVTVLGSITDILV. Residues 1657–1665 lie on the Extracellular side of the membrane; that stretch reads TEFGNNFIN. Asn1665 carries N-linked (GlcNAc...) asparagine glycosylation. Residues 1666–1684 traverse the membrane as a helical segment; it reads LSFLRLFRAARLIKLLRQG. The Cytoplasmic segment spans residues 1685–1703; that stretch reads YTIRILLWTFVQSFKALPY. The helical transmembrane segment at 1704-1723 threads the bilayer; that stretch reads VCLLIAMLFFIYAIIGMQVF. Residues 1724–1795 are Extracellular-facing; the sequence is GNIGIDMEDE…ILTPECGNEF (72 aa). Residues 1796–1820 traverse the membrane as a helical segment; that stretch reads AYFYFVSFIFLCSFLMLNLFVAVIM. Over 1821–2424 the chain is Cytoplasmic; that stretch reads DNFEYLTRDS…GGPRASAPSP (604 aa). At Thr1993 the chain carries Phosphothreonine. The segment at 1997-2424 is disordered; the sequence is FQRMEPPPDE…GGPRASAPSP (428 aa). A compositionally biased stretch (polar residues) spans 2037 to 2053; the sequence is SWVTQRAQEMFQKTGTW. Ser2054, Ser2072, Ser2084, Ser2086, Ser2127, and Ser2148 each carry phosphoserine. The segment covering 2074–2090 has biased composition (basic and acidic residues); it reads EMREMSQDGYSDSEHCL. Basic and acidic residues-rich tracts occupy residues 2142–2159 and 2200–2210; these read RRLDDYSLERVPPEENQR and PSREREQERGR. Basic residues predominate over residues 2211 to 2229; sequence PKDRKHRPHHHHHHHHHPG. Positions 2249–2262 are enriched in low complexity; that stretch reads VARVRPARAPALAH. Basic residues predominate over residues 2280–2305; sequence RRARRPRPRQRRRPRRRRGGGGRALR.

The protein belongs to the calcium channel alpha-1 subunit (TC 1.A.1.11) family. CACNA1A subfamily. As to quaternary structure, voltage-dependent calcium channels are multisubunit complexes, consisting of alpha-1, alpha-2, beta and delta subunits in a 1:1:1:1 ratio. The channel activity is directed by the pore-forming and voltage-sensitive alpha-1 subunit. In many cases, this subunit is sufficient to generate voltage-sensitive calcium channel activity. The auxiliary subunits beta and alpha-2/delta linked by a disulfide bridge regulate the channel activity. Interacts with CABP1. Interacts with the spider omega-agatoxin-IVA (AC P30288). Interacts with TSPOAP1. Brain specific. Purkinje cells contain predominantly P-type VSCC, the Q-type being a prominent calcium current in cerebellar granule cells.

The protein localises to the cell membrane. It carries out the reaction Ca(2+)(in) = Ca(2+)(out). Voltage-sensitive calcium channels (VSCC) mediate the entry of calcium ions into excitable cells and are also involved in a variety of calcium-dependent processes, including muscle contraction, hormone or neurotransmitter release, gene expression, cell motility, cell division and cell death. The isoform alpha-1A gives rise to P and/or Q-type calcium currents. P/Q-type calcium channels belong to the 'high-voltage activated' (HVA) group and are specifically blocked by the spider omega-agatoxin-IVA (AC P54282). They are however insensitive to dihydropyridines (DHP). The chain is Voltage-dependent P/Q-type calcium channel subunit alpha-1A (CACNA1A) from Oryctolagus cuniculus (Rabbit).